The primary structure comprises 110 residues: Nucleoid-associated protein KPK_4227 (110 aa).

The disordered stretch occupies residues 1-22 (MFGGKGGLGNLMKQAQQMQDKM).

Belongs to the YbaB/EbfC family. In terms of assembly, homodimer.

The protein resides in the cytoplasm. It localises to the nucleoid. Functionally, binds to DNA and alters its conformation. May be involved in regulation of gene expression, nucleoid organization and DNA protection. This chain is Nucleoid-associated protein KPK_4227, found in Klebsiella pneumoniae (strain 342).